Consider the following 304-residue polypeptide: Putative ankyrin repeat protein R602 (304 aa).

6 ANK repeats span residues 82-117 (LIRYILYIAYQNHHQDCSVYYEMIKYLIDYGLDITF), 118-146 (NDNFAIKLASLCHENILKLVIDNGGDVHA), 147-176 (DNEFPICLAANHGRLSCVKLLVDCGVDPFC), 178-206 (DNIVIKLASIDYYDNVVEYMVSIGADINA), 207-236 (GNNYVLRYAIKNLDKKMIELAINAGASIND), and 238-266 (SPNDITHIIKYQSPTIMNILVEYGLDIST).

In Acanthamoeba polyphaga (Amoeba), this protein is Putative ankyrin repeat protein R602.